A 113-amino-acid polypeptide reads, in one-letter code: Flagellar transcriptional regulator FlhD (113 aa).

This sequence belongs to the FlhD family. As to quaternary structure, homodimer; disulfide-linked. Forms a heterohexamer composed of two FlhC and four FlhD subunits. Each FlhC binds a FlhD dimer, forming a heterotrimer, and a hexamer assembles by dimerization of two heterotrimers.

It is found in the cytoplasm. Functions in complex with FlhC as a master transcriptional regulator that regulates transcription of several flagellar and non-flagellar operons by binding to their promoter region. Activates expression of class 2 flagellar genes, including fliA, which is a flagellum-specific sigma factor that turns on the class 3 genes. Also regulates genes whose products function in a variety of physiological pathways. This chain is Flagellar transcriptional regulator FlhD, found in Salmonella typhi.